Reading from the N-terminus, the 242-residue chain is EFCDFSGNQAAGGVMVMDTSSPELRQSSSGSDVLNATSSTSSHQVSGDVAGYLNVPSPESNGSNHEGSRESANDNKGLGDARVLNCHSPESQGSGNYGSNVSEGLNYPSDSNKSVHSSPNFENNSIKNGAVEEKIKLEGVNANISKCSSLLKRKKSSEDSNNINIHQKLTNVALSDNVNNDEDEKKRARLVRNRESAQLSRQRKKHYVEELEDKVRIMHSTIQDLNAKVAYIIAENATLKTQ.

Residues 1-125 are disordered; it reads EFCDFSGNQA…HSSPNFENNS (125 aa). Positions 18 to 45 are enriched in polar residues; the sequence is DTSSPELRQSSSGSDVLNATSSTSSHQV. The segment covering 66 to 79 has biased composition (basic and acidic residues); it reads EGSRESANDNKGLG. Polar residues predominate over residues 88 to 125; the sequence is SPESQGSGNYGSNVSEGLNYPSDSNKSVHSSPNFENNS. Residues 183-242 enclose the bZIP domain; that stretch reads DEKKRARLVRNRESAQLSRQRKKHYVEELEDKVRIMHSTIQDLNAKVAYIIAENATLKTQ. Residues 185–216 form a basic motif region; that stretch reads KKRARLVRNRESAQLSRQRKKHYVEELEDKVR. The tract at residues 225–239 is leucine-zipper; the sequence is LNAKVAYIIAENATL.

The protein belongs to the bZIP family.

It localises to the nucleus. Functionally, binds specifically to the DNA sequence 5'-TGACG-3'. The protein is TGACG-sequence-specific DNA-binding protein TGA-1B (TGA1B) of Nicotiana tabacum (Common tobacco).